We begin with the raw amino-acid sequence, 331 residues long: Hydroxysteroid dehydrogenase-like protein 1 (331 aa).

The required for mitochondria translocation stretch occupies residues 2–82; that stretch reads AAVDRFNLLY…TGSTDGIGKA (81 aa). NADP(+) is bound by residues 74 to 80 and aspartate 125; that span reads GSTDGIG. Serine 205 is a binding site for substrate. Tyrosine 218 serves as the catalytic Proton acceptor. Lysine 222 is a binding site for NADP(+).

This sequence belongs to the short-chain dehydrogenases/reductases (SDR) family. 17-beta-HSD 3 subfamily.

It localises to the mitochondrion. Its function is as follows. May catalyze the metabolism of steroid hormones and thus play an important role in sex differentiation, the emergence and maintenance of the secondary sexual characters, and the regulation of endocrine. This chain is Hydroxysteroid dehydrogenase-like protein 1 (HSDL1), found in Gallus gallus (Chicken).